Reading from the N-terminus, the 689-residue chain is Elongation factor G (689 aa).

The 275-residue stretch at 8–282 (ERTRNIGIMA…AVVDYLPAPT (275 aa)) folds into the tr-type G domain. Residues 17–24 (AHIDAGKT), 81–85 (DTPGH), and 135–138 (NKMD) each bind GTP.

Belongs to the TRAFAC class translation factor GTPase superfamily. Classic translation factor GTPase family. EF-G/EF-2 subfamily.

The protein resides in the cytoplasm. Its function is as follows. Catalyzes the GTP-dependent ribosomal translocation step during translation elongation. During this step, the ribosome changes from the pre-translocational (PRE) to the post-translocational (POST) state as the newly formed A-site-bound peptidyl-tRNA and P-site-bound deacylated tRNA move to the P and E sites, respectively. Catalyzes the coordinated movement of the two tRNA molecules, the mRNA and conformational changes in the ribosome. The polypeptide is Elongation factor G (Desulforudis audaxviator (strain MP104C)).